Consider the following 223-residue polypeptide: Holliday junction branch migration complex subunit RuvA (223 aa).

Positions 1-64 (MIGRIAGVIL…EDLLQLFGFP (64 aa)) are domain I. The interval 65 to 143 (TLLEKEWHRL…AVMALGGALT (79 aa)) is domain II. The segment at 144-169 (VDPGPLPEVELVEAAVPAPVPAKAAP) is flexible linker. Residues 170 to 223 (SSAQATADALSALGNLGYAPSEAASAVAEAAAREPAAPTAALIRAALRLLAPKE) are domain III.

It belongs to the RuvA family. Homotetramer. Forms an RuvA(8)-RuvB(12)-Holliday junction (HJ) complex. HJ DNA is sandwiched between 2 RuvA tetramers; dsDNA enters through RuvA and exits via RuvB. An RuvB hexamer assembles on each DNA strand where it exits the tetramer. Each RuvB hexamer is contacted by two RuvA subunits (via domain III) on 2 adjacent RuvB subunits; this complex drives branch migration. In the full resolvosome a probable DNA-RuvA(4)-RuvB(12)-RuvC(2) complex forms which resolves the HJ.

It localises to the cytoplasm. The RuvA-RuvB-RuvC complex processes Holliday junction (HJ) DNA during genetic recombination and DNA repair, while the RuvA-RuvB complex plays an important role in the rescue of blocked DNA replication forks via replication fork reversal (RFR). RuvA specifically binds to HJ cruciform DNA, conferring on it an open structure. The RuvB hexamer acts as an ATP-dependent pump, pulling dsDNA into and through the RuvAB complex. HJ branch migration allows RuvC to scan DNA until it finds its consensus sequence, where it cleaves and resolves the cruciform DNA. This Paracoccus denitrificans (strain Pd 1222) protein is Holliday junction branch migration complex subunit RuvA.